Consider the following 662-residue polypeptide: Protein Aster-C (662 aa).

Residues 1–34 (MEGAPTVRQVMNEGDSSLATELQEDVEENPSPTV) are disordered. A GRAM domain is found at 69–136 (EEYRRQFTHL…KNITFMTKEK (68 aa)). 2 disordered regions span residues 212 to 237 (SIEDVRPRSPGRSSLDDSGERDEKLS) and 250 to 284 (VSETESFDGNSSKGGLGKEESQNEKQTKKSLLPTL). A compositionally biased stretch (basic and acidic residues) spans 265–276 (LGKEESQNEKQT). The region spanning 326-497 (HGRLFINRIF…DLLIEESILN (172 aa)) is the VASt domain. Residues 557–577 (LIVVMSIFVLLLVLLNVTLFL) form a helical membrane-spanning segment.

Its subcellular location is the endoplasmic reticulum membrane. It is found in the cell membrane. Its function is as follows. Cholesterol transporter that mediates non-vesicular transport of cholesterol from the plasma membrane (PM) to the endoplasmic reticulum (ER). Contains unique domains for binding cholesterol and the PM, thereby serving as a molecular bridge for the transfer of cholesterol from the PM to the ER. Plays a crucial role in cholesterol homeostasis and has the unique ability to localize to the PM based on the level of membrane cholesterol. In lipid-poor conditions localizes to the ER membrane and in response to excess cholesterol in the PM is recruited to the endoplasmic reticulum-plasma membrane contact sites (EPCS) which is mediated by the GRAM domain. At the EPCS, the sterol-binding VASt/ASTER domain binds to the cholesterol in the PM and facilitates its transfer from the PM to ER. This chain is Protein Aster-C (GRAMD1C), found in Pongo abelii (Sumatran orangutan).